A 542-amino-acid polypeptide reads, in one-letter code: MAQGQQPIFILPQDTSRYVGREAQRINILAGKVLAETVRTTLGPKGMDKMLVDSLGDIVITNDGVTILREMDISHPAAKMLVEVAKTQEDEVGDGTTTAVIIAGELLKEAEKLIEMGVHPTIIALGYRNAALKAQEILEEISMEASDRDTLMKVAITAMTGKGSERAKEKLAELVVDAVMQVEEDGEIDKDNINIQRIQGASVNESRIVNGIVIDKSRADTSMPKRIEKARIALLKYPIEVKDLETDAKIRLTDPSQMQAFIEQEEQMIRDMVEKIKSSGANVVFCQKGIDDLALHYLSREGIMALKRVKKSDIKRIEKATGARLVTNIDDLTAEDLGEAGVIYEKKIFDEVLTFIEECRDPKAISIILRGSTKHVAEEMERALEDAIGVVASTLEDREVVAGGGAPEVEIARKLREYADTISGREQLAVSAFADALEIVPKTLAENAGLDSIDVLVDLRAAHEESPYMGIDVFDGNIVDMKEAGVIEPQRVKKQAIQSAAEAAEMILRIDDMIAARGFDVSSKDEEDMEGMGGMGGMPPMM.

It belongs to the TCP-1 chaperonin family. In terms of assembly, forms a Heterooligomeric complex of two stacked eight-membered rings.

Functionally, molecular chaperone; binds unfolded polypeptides in vitro, and has a weak ATPase activity. This is Thermosome subunit alpha (thsA) from Methanothermobacter thermautotrophicus (strain ATCC 29096 / DSM 1053 / JCM 10044 / NBRC 100330 / Delta H) (Methanobacterium thermoautotrophicum).